A 232-amino-acid chain; its full sequence is Orotate phosphoribosyltransferase (232 aa).

Residues R107, K108, K111, H113, and 133 to 141 contribute to the 5-phospho-alpha-D-ribose 1-diphosphate site; that span reads EDLTTAGGS. Position 137 (T137) interacts with orotate.

This sequence belongs to the purine/pyrimidine phosphoribosyltransferase family. PyrE subfamily. In terms of assembly, homodimer. Requires Mg(2+) as cofactor.

It catalyses the reaction orotidine 5'-phosphate + diphosphate = orotate + 5-phospho-alpha-D-ribose 1-diphosphate. The protein operates within pyrimidine metabolism; UMP biosynthesis via de novo pathway; UMP from orotate: step 1/2. Its function is as follows. Catalyzes the transfer of a ribosyl phosphate group from 5-phosphoribose 1-diphosphate to orotate, leading to the formation of orotidine monophosphate (OMP). The chain is Orotate phosphoribosyltransferase from Rhizobium rhizogenes (strain K84 / ATCC BAA-868) (Agrobacterium radiobacter).